We begin with the raw amino-acid sequence, 702 residues long: Polyribonucleotide nucleotidyltransferase (702 aa).

Mg(2+) contacts are provided by D485 and D491. The region spanning 552–611 (PKTSTLQIDPEKIRDVIGAGGKVINKIIADTGVKIDIKEDGLVYVSSAESEGVKEAVKII) is the KH domain. In terms of domain architecture, S1 motif spans 621–689 (GEIYLGKVTK…SQGRINLSRK (69 aa)).

Belongs to the polyribonucleotide nucleotidyltransferase family. Mg(2+) is required as a cofactor.

The protein resides in the cytoplasm. It carries out the reaction RNA(n+1) + phosphate = RNA(n) + a ribonucleoside 5'-diphosphate. Involved in mRNA degradation. Catalyzes the phosphorolysis of single-stranded polyribonucleotides processively in the 3'- to 5'-direction. This is Polyribonucleotide nucleotidyltransferase from Clostridium perfringens (strain 13 / Type A).